Consider the following 349-residue polypeptide: Methionine import ATP-binding protein MetN (349 aa).

Residues 5–245 (IDLKNITVQF…PQKQLTRQFV (241 aa)) form the ABC transporter domain. Position 37–44 (37–44 (GFSGAGKS)) interacts with ATP.

Belongs to the ABC transporter superfamily. Methionine importer (TC 3.A.1.24) family. As to quaternary structure, the complex is composed of two ATP-binding proteins (MetN), two transmembrane proteins (MetI) and a solute-binding protein (MetQ).

It localises to the cell membrane. The catalysed reaction is L-methionine(out) + ATP + H2O = L-methionine(in) + ADP + phosphate + H(+). It carries out the reaction D-methionine(out) + ATP + H2O = D-methionine(in) + ADP + phosphate + H(+). Its function is as follows. Part of the ABC transporter complex MetNIQ involved in methionine import. Responsible for energy coupling to the transport system. The protein is Methionine import ATP-binding protein MetN of Lactobacillus johnsonii (strain CNCM I-12250 / La1 / NCC 533).